Reading from the N-terminus, the 448-residue chain is Cyclic dof factor 3 (448 aa).

The interval 26–108 (AVTVEDDEED…DGKTLKKPTK (83 aa)) is disordered. Over residues 29–39 (VEDDEEDDWSG) the composition is skewed to acidic residues. Over residues 40 to 54 (GDDKSPEKVTPELSD) the composition is skewed to basic and acidic residues. Residues 55-69 (KNNNNCNDNSFNNSK) show a composition bias toward low complexity. The segment covering 80–99 (STDQIESSDTPEDNQQTTPD) has biased composition (polar residues). The Dof-type zinc finger occupies 110–164 (LPCPRCKSMETKFCYYNNYNINQPRHFCKACQRYWTAGGTMRNVPVGAGRRKNKS). Residues C112, C115, C137, and C140 each contribute to the Zn(2+) site. Disordered stretches follow at residues 243 to 269 (NGDD…AQSG) and 332 to 370 (SSSP…KQKA). 2 stretches are compositionally biased toward polar residues: residues 246–259 (DCSS…SNNH) and 332–347 (SSSP…NSPT). Residues 351-368 (HPRDEGSSKKDNETERKQ) show a composition bias toward basic and acidic residues.

Interacts with ADO2 (via kelch repeats) and ADO3 (via kelch repeats). Expressed in the vasculature of cotyledons and hypocotyls, leaves and roots.

It localises to the nucleus. Transcription factor that binds specifically to a 5'-AA[AG]G-3' consensus core sequence. Regulates a photoperiodic flowering response. Transcriptional repressor of 'CONSTANS' expression. The protein is Cyclic dof factor 3 (CDF3) of Arabidopsis thaliana (Mouse-ear cress).